Here is a 107-residue protein sequence, read N- to C-terminus: Iron-sulfur cluster assembly protein CyaY (107 aa).

This sequence belongs to the frataxin family.

In terms of biological role, involved in iron-sulfur (Fe-S) cluster assembly. May act as a regulator of Fe-S biogenesis. This Yersinia pseudotuberculosis serotype O:1b (strain IP 31758) protein is Iron-sulfur cluster assembly protein CyaY.